A 234-amino-acid chain; its full sequence is BTB/POZ domain-containing protein KCTD5 (234 aa).

A2 is modified (N-acetylalanine). Residues K44–D146 form the BTB domain. The tract at residues P213–M234 is disordered. The segment covering P220–M234 has biased composition (basic and acidic residues).

Homopentamer. Interacts (via C-terminus) with GRASP55/GORASP2. Interacts with CUL3 and with ubiquitinated proteins. Interacts with CRY1.

It is found in the cytoplasm. Its subcellular location is the cytosol. The protein localises to the nucleus. Its function is as follows. Its interaction with CUL3 suggests that it may act as a substrate adapter in some E3 ligase complex. Does not affect the function of Kv channel Kv2.1/KCNB1, Kv1.2/KCNA2, Kv4.2/KCND2 and Kv3.4/KCNC4. The chain is BTB/POZ domain-containing protein KCTD5 (Kctd5) from Rattus norvegicus (Rat).